Consider the following 122-residue polypeptide: Vitelline membrane protein Vm32E (122 aa).

An N-terminal signal peptide occupies residues 1–19 (MKTVAFLAVVVLFAAFACA). One can recognise a VM domain in the interval 40-79 (SVPAPPCPKNYLFSCQPNLVPAPCAQQAAPAAYGSAGAYT).

The protein belongs to the vitelline membrane family.

Its subcellular location is the secreted. Its function is as follows. Major early eggshell protein. The polypeptide is Vitelline membrane protein Vm32E (Drosophila persimilis (Fruit fly)).